Here is a 647-residue protein sequence, read N- to C-terminus: MSSEERSRQPSTVSTFDLEPNPFEQSFASSKKALSLPGTISHPSLPKELSRNNSTSTITQHSQRSTHSLNSIPEENGNSTVTDNSNHNDVKKDSPSFLPGQQRPTIISPPILTPGGSKRLPPLLLSPSILYQANSTTNPSQNSHSVSVSNSNPSAIGVSSTSGSLYPNSSSPSGTSLIRQPRNSNVTTSNSGNGFPTNDSQMPGFLLNLSKSGLTPNESNIRTGLTPGILTQSYNYPVLPSINKNTITGSKNVNKSVTVNGSIENHPHVNIMHPTVNGTPLTPGLSSLLNLPSTGVLANPVFKSTPTTNTTDGTVNNSISNSNFSPNTSTKAAVKMDNPAEFNAIEHSAHNHKENENLTTQIENNDQFNNKTRKRKRRMSSTSSTSKASRKNSISRKNSAVTTAPAQKDDVENNKISNNVTLDENEEQERKRKEFLERNRVAASKFRKRKKEYIKKIENDLQFYESEYDDLTQVIGKLCGIIPSSSSNSQFNVNVSTPSSSSPPSTSLIALLESSISRSDYSSAMSVLSNMKQLICETNFYRRGGKNPRDDMDGQEDSFNKDTNVVKSENAGYPSVNSRPIILDKKYSLNSGANISKSNTTTNNVGNSAQNIINSCYSVTNPLVINANSDTHDTNKHDVLSTLPHNN.

Disordered regions lie at residues 1 to 119, 135 to 204, 305 to 331, and 353 to 429; these read MSSE…GSKR, STTN…QMPG, TPTT…TSTK, and KENE…EEQE. Residues 51–85 show a composition bias toward polar residues; sequence RNNSTSTITQHSQRSTHSLNSIPEENGNSTVTDNS. Ser94 carries the post-translational modification Phosphoserine. Thr113 is subject to Phosphothreonine. Composition is skewed to low complexity over residues 138-194 and 305-329; these read NPSQ…SGNG and TPTT…PNTS. 2 stretches are compositionally biased toward polar residues: residues 357-368 and 396-405; these read NLTTQIENNDQF and RKNSAVTTAP. Ser399 is modified (phosphoserine). Residues 429–492 enclose the bZIP domain; the sequence is ERKRKEFLER…PSSSSNSQFN (64 aa). The basic motif stretch occupies residues 430–451; it reads RKRKEFLERNRVAASKFRKRKK. The tract at residues 454 to 461 is leucine-zipper; the sequence is IKKIENDL. Ser558 is modified (phosphoserine).

The protein belongs to the bZIP family.

It localises to the nucleus. Binds to the CRE motif 5'-TGACGTCA-3' and acts as a repressor of transcription of the SUC2 gene and most probably other genes. The protein is CRE-binding bZIP protein SKO1 (SKO1) of Saccharomyces cerevisiae (strain ATCC 204508 / S288c) (Baker's yeast).